A 156-amino-acid polypeptide reads, in one-letter code: Ribonuclease H (156 aa).

Residues 1–142 enclose the RNase H type-1 domain; it reads MGKQVEIFTD…CDELARAAAN (142 aa). Residues Asp-10, Glu-48, Asp-70, and Asp-134 each coordinate Mg(2+).

This sequence belongs to the RNase H family. Monomer. Mg(2+) is required as a cofactor.

Its subcellular location is the cytoplasm. It catalyses the reaction Endonucleolytic cleavage to 5'-phosphomonoester.. Functionally, endonuclease that specifically degrades the RNA of RNA-DNA hybrids. This chain is Ribonuclease H, found in Photorhabdus laumondii subsp. laumondii (strain DSM 15139 / CIP 105565 / TT01) (Photorhabdus luminescens subsp. laumondii).